The primary structure comprises 931 residues: MEPDIIRMYSSSPPPLDNGAEDDEEDEFGEFGGFSEVSPSGVGFVDFDTPDYTRPKEDFVPSNHFMPIHEYSEDVDSLTSFKSVQNGNDKDITAELSTPVKSQSDVVLSTTSKEMIPSKTLDPSIDGMESLEDLDKVVVQGPSTGQLRSFSPGDFRTDKNIVHQTKQLESCNGEKPPCLEILTNGFAGLETVNPQGTDDLDNVADSKGSKPLNTCGTECILESAASHATEFADFSTFSQTERTQLEEIECPVLNDGDTLTIQGNSKGPRVKELNCVKEVTLDGSFEDTGNTEREHQVCVSEIHAVADRGLSVEKQDLQTLQQDEFLNSRIQSEAWSLVDSSENSEAITKERCKMEKNDLFASKCADLSMDSVKTSDVNEIGSSKEENRKLTNPKSPDPDPTGQNALDDSAASMKNGDSGNGFVTCHDTNEDDFGDFGTANGTTPPFVTSTQDSMSDVTFEDSSEHFLHLSEPGDDFGEFEDTNAVSCQEEMRFTESDLRQTSDGLSEECPLAGESGGKDSKPDSKLKNGQDSEFGDFDSVPNTQGSAFQDSDDFADFSSAGPSQAVDWNAFEDEQKDGCSWAAFGDQQETESHHLKEVWQSQRTDETMGTLGTPKMHSVSSAASKGAVASGHLQEPGTSVQTALLNRLERIFEACFPSVFVPDVEEEVSSLKHLLETHSSPAKTREALADRGELRGVWTELQDIHDAHGLRYQWGGSHSNKKLLCSLGIDTRNILFTGNKKQPVIVPMYAAGLGMLEPTKEPLKPLSAAEKIASIGQTTVMTPEINTCTSDPFQESLPPVQFDWSSSGLTNPLDASGGSTLLNLDFFGPVDDSSSSSSTIPGVDPELYELTTAKLETSTSSLRVTDAFAKLMSTVEKTSTSTRKPKREEHLSEEAMKVIASLPDLTFMHAKVLMFPATLTPSMSSQEQADA.

The disordered stretch occupies residues 1-49; it reads MEPDIIRMYSSSPPPLDNGAEDDEEDEFGEFGGFSEVSPSGVGFVDFDT. A compositionally biased stretch (acidic residues) spans 19-29; it reads GAEDDEEDEFG. The short motif at 28–31 is the WXXF motif 1 element; that stretch reads FGEF. Over residues 33–45 the composition is skewed to low complexity; it reads GFSEVSPSGVGFV. S151 bears the Phosphoserine mark. A compositionally biased stretch (polar residues) spans 371–381; it reads SVKTSDVNEIG. A disordered region spans residues 371-454; it reads SVKTSDVNEI…PFVTSTQDSM (84 aa). At S395 the chain carries Phosphoserine. The WXXF motif 2 motif lies at 433–436; the sequence is FGDF. The span at 439–454 shows a compositional bias: polar residues; that stretch reads ANGTTPPFVTSTQDSM. Positions 476–479 match the WXXF motif 3 motif; it reads FGEF. Disordered stretches follow at residues 494-561 and 599-636; these read TESD…SSAG and WQSQRTDETMGTLGTPKMHSVSSAASKGAVASGHLQEP. Over residues 516–530 the composition is skewed to basic and acidic residues; sequence GGKDSKPDSKLKNGQ. At T613 the chain carries Phosphothreonine. The span at 618–631 shows a compositional bias: low complexity; it reads SVSSAASKGAVASG. Residues 712-714 carry the CLTCL1/Clathrin-binding motif; the sequence is YQW. A clathrin-binding region spans residues 821-825; that stretch reads LLNLD.

Self-associates. Interacts with GGA1 (via GAE domain). Interacts with GGA3 (via GAE domain), AP1G1 (via GAE domain) and AP1G2 (via GAE domain). Component of the aftiphilin/p200/gamma-synergin complex, at least composed of AFTPH/aftiphilin, HEATR5B/p200a and SYNRG/gamma-synergin, which plays a role in the AP1G1/AP-1-mediated protein trafficking from early to recycling endosomes. Within the complex interacts with HEATR5B/p200a and SYNRG/gamma-synergin; the interactions are direct. Interacts with AP1G1/AP-1; the interaction is required to recruit AFTPH/aftiphilin to the perinuclear region of the cell. Interacts with CLTCL1/Clathrin.

It is found in the cytoplasm. The protein localises to the perinuclear region. Its subcellular location is the cytoplasmic vesicle. It localises to the clathrin-coated vesicle. Its function is as follows. Component of clathrin-coated vesicles. Component of the aftiphilin/p200/gamma-synergin complex, which plays roles in AP1G1/AP-1-mediated protein trafficking including the trafficking of transferrin from early to recycling endosomes, and the membrane trafficking of furin and the lysosomal enzyme cathepsin D between the trans-Golgi network (TGN) and endosomes. In Mus musculus (Mouse), this protein is Aftiphilin (Aftph).